Consider the following 138-residue polypeptide: Phosphoribosyl-AMP cyclohydrolase (138 aa).

Aspartate 92 contributes to the Mg(2+) binding site. Cysteine 93 serves as a coordination point for Zn(2+). 2 residues coordinate Mg(2+): aspartate 94 and aspartate 96. Zn(2+) contacts are provided by cysteine 109 and cysteine 116.

The protein belongs to the PRA-CH family. Homodimer. The cofactor is Mg(2+). Zn(2+) is required as a cofactor.

Its subcellular location is the cytoplasm. The catalysed reaction is 1-(5-phospho-beta-D-ribosyl)-5'-AMP + H2O = 1-(5-phospho-beta-D-ribosyl)-5-[(5-phospho-beta-D-ribosylamino)methylideneamino]imidazole-4-carboxamide. The protein operates within amino-acid biosynthesis; L-histidine biosynthesis; L-histidine from 5-phospho-alpha-D-ribose 1-diphosphate: step 3/9. In terms of biological role, catalyzes the hydrolysis of the adenine ring of phosphoribosyl-AMP. This Clavibacter sepedonicus (Clavibacter michiganensis subsp. sepedonicus) protein is Phosphoribosyl-AMP cyclohydrolase.